The primary structure comprises 335 residues: Homeobox protein DBX1 (335 aa).

Disordered regions lie at residues 58-102 (IPAA…LSPA) and 240-335 (KERE…ITVS). Over residues 83–95 (GSPGSGSRRGSSP) the composition is skewed to low complexity. The segment at residues 181–240 (GMLRRAVFSDVQRKALEKTFQKQKYISKPDRKKLASKLGLKDSQVKIWFQNRRMKWRNSK) is a DNA-binding region (homeobox). The span at 299 to 317 (GPLPASPAHSSSPGKPSDF) shows a compositional bias: low complexity. A compositionally biased stretch (acidic residues) spans 318–335 (SDSDEDEEGEEDEEITVS).

This sequence belongs to the H2.0 homeobox family.

The protein localises to the nucleus. Could have a role in patterning the central nervous system during embryogenesis. Has a key role in regulating the distinct phenotypic features that distinguish two major classes of ventral interneurons, V0 and V1 neurons. Regulates the transcription factor profile, neurotransmitter phenotype, intraspinal migratory path and axonal trajectory of V0 neurons, features that differentiate them from an adjacent set of V1 neurons. This is Homeobox protein DBX1 (Dbx1) from Mus musculus (Mouse).